A 438-amino-acid polypeptide reads, in one-letter code: MSETHLSTQRFADLPLHPEVKQALAENGFEFCTPIQALSLPVLLQSKDIAGQAQTGTGKTMAFLVATFNHLLSTPVPEGRLINQPRAIIMAPTRELAIQIAKDAILLAKHTHLKVGIVYGGESYDVQRKVLDQGVDILIGTTGRIIDYVRQGIIGLNSIQAVVLDEADRMFDLGFIKDIRFLFRRMPEANQRLNMLFSATLSMKVQELAYDHMNEPVKVEIAPEEKTSKNIKEEIFYPSQEEKMRLLLTLIEEDWPEKAIVFSNTKHSCETLWSWLEGDGHRVGLLTGDVPQKKRIRILEQFTSGQLDILVATDVAARGLHISDVSHVYNYDLPDDCEDYVHRIGRTGRAGNKGMSISFACEEYALNLPAIESYINHSIPVSNYDSEALLADIPTPAKIHRKHPSGTRNLRDRSGASRPGAQRSGARPPRHDRTRRHS.

A Q motif motif is present at residues 9–37 (QRFADLPLHPEVKQALAENGFEFCTPIQA). A Helicase ATP-binding domain is found at 40–219 (LPVLLQSKDI…YDHMNEPVKV (180 aa)). ATP is bound at residue 53-60 (AQTGTGKT). The short motif at 165 to 168 (DEAD) is the DEAD box element. One can recognise a Helicase C-terminal domain in the interval 243–390 (KMRLLLTLIE…VSNYDSEALL (148 aa)). The tract at residues 395–438 (TPAKIHRKHPSGTRNLRDRSGASRPGAQRSGARPPRHDRTRRHS) is disordered. Residues 428-438 (PPRHDRTRRHS) show a composition bias toward basic residues.

It belongs to the DEAD box helicase family. RhlB subfamily. Component of the RNA degradosome, which is a multiprotein complex involved in RNA processing and mRNA degradation.

It localises to the cytoplasm. It carries out the reaction ATP + H2O = ADP + phosphate + H(+). In terms of biological role, DEAD-box RNA helicase involved in RNA degradation. Has RNA-dependent ATPase activity and unwinds double-stranded RNA. This chain is ATP-dependent RNA helicase RhlB, found in Shewanella baltica (strain OS185).